The primary structure comprises 299 residues: MNSLVILLGPTGVGKTELSLQVAERFGSPIISSDSRQLYKDLPIGTAAPTPEQMARVKHYMVGTLSLTDYYSASNFEEDVVSLLSELHKTIPTVVMTGGSMMYIDAVCKGIDDIPTVTPEIRDALYMQFETEGLAPILAELKEADPVHYEEVDRNNYKRVIHAVEICRMTGKPYSSFRTNIKKERPFRIIKVGLNRDRDELCDRINQRVDQMMSEGLLEEARRAYPFRHLNSLNTVGYKELFNYFSGEWTLDLAVEKIKRNSRVYARKQMTWFKRDPEITWFHPDETEAIFTHLSQQII.

9–16 (GPTGVGKT) contributes to the ATP binding site. 11–16 (TGVGKT) serves as a coordination point for substrate. Residues 34–37 (DSRQ) form an interaction with substrate tRNA region.

It belongs to the IPP transferase family. Monomer. It depends on Mg(2+) as a cofactor.

It carries out the reaction adenosine(37) in tRNA + dimethylallyl diphosphate = N(6)-dimethylallyladenosine(37) in tRNA + diphosphate. Catalyzes the transfer of a dimethylallyl group onto the adenine at position 37 in tRNAs that read codons beginning with uridine, leading to the formation of N6-(dimethylallyl)adenosine (i(6)A). This Parabacteroides distasonis (strain ATCC 8503 / DSM 20701 / CIP 104284 / JCM 5825 / NCTC 11152) protein is tRNA dimethylallyltransferase 2.